Here is a 340-residue protein sequence, read N- to C-terminus: Tetraacyldisaccharide 4'-kinase (340 aa).

50-57 (HGGGAGKT) is an ATP binding site.

The protein belongs to the LpxK family.

It carries out the reaction a lipid A disaccharide + ATP = a lipid IVA + ADP + H(+). Its pathway is glycolipid biosynthesis; lipid IV(A) biosynthesis; lipid IV(A) from (3R)-3-hydroxytetradecanoyl-[acyl-carrier-protein] and UDP-N-acetyl-alpha-D-glucosamine: step 6/6. Its function is as follows. Transfers the gamma-phosphate of ATP to the 4'-position of a tetraacyldisaccharide 1-phosphate intermediate (termed DS-1-P) to form tetraacyldisaccharide 1,4'-bis-phosphate (lipid IVA). The chain is Tetraacyldisaccharide 4'-kinase from Rhodopseudomonas palustris (strain BisA53).